A 113-amino-acid chain; its full sequence is Pancreatic progenitor cell differentiation and proliferation factor B (113 aa).

The protein belongs to the PPDPF family.

Probable regulator of exocrine pancreas development. The sequence is that of Pancreatic progenitor cell differentiation and proliferation factor B (ppdpf-b) from Xenopus laevis (African clawed frog).